The following is a 279-amino-acid chain: Pantothenate synthetase (279 aa).

Residue 26–33 (MGNLHEGH) coordinates ATP. His-33 functions as the Proton donor in the catalytic mechanism. A (R)-pantoate-binding site is contributed by Gln-57. A beta-alanine-binding site is contributed by Gln-57. Residue 144-147 (GKKD) coordinates ATP. Residue Gln-150 coordinates (R)-pantoate. ATP is bound by residues Val-173 and 181 to 184 (LSSR).

The protein belongs to the pantothenate synthetase family. Homodimer.

It is found in the cytoplasm. The catalysed reaction is (R)-pantoate + beta-alanine + ATP = (R)-pantothenate + AMP + diphosphate + H(+). It functions in the pathway cofactor biosynthesis; (R)-pantothenate biosynthesis; (R)-pantothenate from (R)-pantoate and beta-alanine: step 1/1. Catalyzes the condensation of pantoate with beta-alanine in an ATP-dependent reaction via a pantoyl-adenylate intermediate. The chain is Pantothenate synthetase from Burkholderia orbicola (strain MC0-3).